The chain runs to 380 residues: Cytochrome b (380 aa).

A run of 4 helical transmembrane segments spans residues 34–54, 78–99, 114–134, and 179–199; these read FGSL…LLAM, WLIR…YFHI, WNTG…GYVL, and FFAL…IHLT. His84 and His98 together coordinate heme b. Heme b-binding residues include His183 and His197. His202 serves as a coordination point for a ubiquinone. The next 4 helical transmembrane spans lie at 227–247, 289–309, 321–341, and 348–368; these read LKDI…ALFS, LGGV…PFLH, ISQL…WVGS, and FIII…VLFP.

This sequence belongs to the cytochrome b family. As to quaternary structure, the cytochrome bc1 complex contains 11 subunits: 3 respiratory subunits (MT-CYB, CYC1 and UQCRFS1), 2 core proteins (UQCRC1 and UQCRC2) and 6 low-molecular weight proteins (UQCRH/QCR6, UQCRB/QCR7, UQCRQ/QCR8, UQCR10/QCR9, UQCR11/QCR10 and a cleavage product of UQCRFS1). This cytochrome bc1 complex then forms a dimer. It depends on heme b as a cofactor.

It is found in the mitochondrion inner membrane. Component of the ubiquinol-cytochrome c reductase complex (complex III or cytochrome b-c1 complex) that is part of the mitochondrial respiratory chain. The b-c1 complex mediates electron transfer from ubiquinol to cytochrome c. Contributes to the generation of a proton gradient across the mitochondrial membrane that is then used for ATP synthesis. The polypeptide is Cytochrome b (MT-CYB) (Pachyptila salvini (Salvin's prion)).